The following is a 192-amino-acid chain: NADH-quinone oxidoreductase subunit B 1 (192 aa).

[4Fe-4S] cluster-binding residues include Cys-71, Cys-72, Cys-136, and Cys-166.

The protein belongs to the complex I 20 kDa subunit family. As to quaternary structure, NDH-1 is composed of 14 different subunits. Subunits NuoB, C, D, E, F, and G constitute the peripheral sector of the complex. Requires [4Fe-4S] cluster as cofactor.

Its subcellular location is the cell inner membrane. The enzyme catalyses a quinone + NADH + 5 H(+)(in) = a quinol + NAD(+) + 4 H(+)(out). NDH-1 shuttles electrons from NADH, via FMN and iron-sulfur (Fe-S) centers, to quinones in the respiratory chain. The immediate electron acceptor for the enzyme in this species is believed to be ubiquinone. Couples the redox reaction to proton translocation (for every two electrons transferred, four hydrogen ions are translocated across the cytoplasmic membrane), and thus conserves the redox energy in a proton gradient. This is NADH-quinone oxidoreductase subunit B 1 from Rhizobium meliloti (strain 1021) (Ensifer meliloti).